The sequence spans 149 residues: SsrA-binding protein (149 aa).

This sequence belongs to the SmpB family.

It is found in the cytoplasm. Required for rescue of stalled ribosomes mediated by trans-translation. Binds to transfer-messenger RNA (tmRNA), required for stable association of tmRNA with ribosomes. tmRNA and SmpB together mimic tRNA shape, replacing the anticodon stem-loop with SmpB. tmRNA is encoded by the ssrA gene; the 2 termini fold to resemble tRNA(Ala) and it encodes a 'tag peptide', a short internal open reading frame. During trans-translation Ala-aminoacylated tmRNA acts like a tRNA, entering the A-site of stalled ribosomes, displacing the stalled mRNA. The ribosome then switches to translate the ORF on the tmRNA; the nascent peptide is terminated with the 'tag peptide' encoded by the tmRNA and targeted for degradation. The ribosome is freed to recommence translation, which seems to be the essential function of trans-translation. The sequence is that of SsrA-binding protein from Wolbachia pipientis subsp. Culex pipiens (strain wPip).